The sequence spans 309 residues: Elongation factor Ts (309 aa).

The segment at threonine 82–valine 85 is involved in Mg(2+) ion dislocation from EF-Tu.

This sequence belongs to the EF-Ts family.

Its subcellular location is the cytoplasm. Functionally, associates with the EF-Tu.GDP complex and induces the exchange of GDP to GTP. It remains bound to the aminoacyl-tRNA.EF-Tu.GTP complex up to the GTP hydrolysis stage on the ribosome. The sequence is that of Elongation factor Ts from Rickettsia bellii (strain OSU 85-389).